A 428-amino-acid chain; its full sequence is Adenylosuccinate synthetase (428 aa).

Residues 12 to 18 (GDEGKGK) and 40 to 42 (GHT) each bind GTP. Residue Asp13 is the Proton acceptor of the active site. Residues Asp13 and Gly40 each contribute to the Mg(2+) site. IMP contacts are provided by residues 13–16 (DEGK), 38–41 (NAGH), Thr130, Arg144, Gln225, Thr240, and Arg304. The active-site Proton donor is His41. Substrate is bound at residue 300 to 306 (ATTGRPR). Residues Arg306, 332 to 334 (KLD), and 415 to 417 (SVG) contribute to the GTP site.

The protein belongs to the adenylosuccinate synthetase family. In terms of assembly, homodimer. Mg(2+) is required as a cofactor.

The protein localises to the cytoplasm. It carries out the reaction IMP + L-aspartate + GTP = N(6)-(1,2-dicarboxyethyl)-AMP + GDP + phosphate + 2 H(+). It functions in the pathway purine metabolism; AMP biosynthesis via de novo pathway; AMP from IMP: step 1/2. Functionally, plays an important role in the de novo pathway of purine nucleotide biosynthesis. Catalyzes the first committed step in the biosynthesis of AMP from IMP. The sequence is that of Adenylosuccinate synthetase from Lawsonia intracellularis (strain PHE/MN1-00).